Reading from the N-terminus, the 352-residue chain is S-adenosylmethionine:tRNA ribosyltransferase-isomerase (352 aa).

The protein belongs to the QueA family. As to quaternary structure, monomer.

It is found in the cytoplasm. It catalyses the reaction 7-aminomethyl-7-carbaguanosine(34) in tRNA + S-adenosyl-L-methionine = epoxyqueuosine(34) in tRNA + adenine + L-methionine + 2 H(+). The protein operates within tRNA modification; tRNA-queuosine biosynthesis. Transfers and isomerizes the ribose moiety from AdoMet to the 7-aminomethyl group of 7-deazaguanine (preQ1-tRNA) to give epoxyqueuosine (oQ-tRNA). The protein is S-adenosylmethionine:tRNA ribosyltransferase-isomerase of Paraburkholderia phytofirmans (strain DSM 17436 / LMG 22146 / PsJN) (Burkholderia phytofirmans).